A 446-amino-acid chain; its full sequence is uncharacterized protein (446 aa).

Disordered stretches follow at residues 198 to 233 (SIQK…ENYS), 309 to 337 (NEDN…DDSK), and 394 to 431 (SESV…FGNT). Residues 199-224 (IQKQIPKQTQEQTQKQTQEQTQESSQ) are compositionally biased toward low complexity. Over residues 317–333 (DNEEDSDESDIESDSDL) the composition is skewed to acidic residues. A compositionally biased stretch (basic and acidic residues) spans 397–418 (VKSDSNESKSIKPESIKSESIK).

This is an uncharacterized protein from Acanthamoeba polyphaga mimivirus (APMV).